The chain runs to 562 residues: Membrane protein insertase YidC (562 aa).

The chain crosses the membrane as a helical span at residues Met1–Leu21. Residues Thr42–Leu74 form a disordered region. Helical transmembrane passes span Leu343 to Leu363, Ile369 to Phe389, Leu439 to Leu459, Trp470 to Met490, and Pro517 to Val537.

This sequence belongs to the OXA1/ALB3/YidC family. Type 1 subfamily. Interacts with the Sec translocase complex via SecD. Specifically interacts with transmembrane segments of nascent integral membrane proteins during membrane integration.

The protein resides in the cell inner membrane. Required for the insertion and/or proper folding and/or complex formation of integral membrane proteins into the membrane. Involved in integration of membrane proteins that insert both dependently and independently of the Sec translocase complex, as well as at least some lipoproteins. Aids folding of multispanning membrane proteins. This Pseudomonas syringae pv. tomato (strain ATCC BAA-871 / DC3000) protein is Membrane protein insertase YidC.